The following is a 54-amino-acid chain: Conotoxin vc5c (54 aa).

The signal sequence occupies residues 1 to 14 (VILLLLIASIPSDA). Residues 15–43 (VQLKTKDDMPLASFHGNARRTLQMLSNKR) constitute a propeptide that is removed on maturation. At E50 the chain carries 4-carboxyglutamate. W51 bears the 6'-bromotryptophan mark.

This sequence belongs to the conotoxin T superfamily. Post-translationally, contains 2 disulfide bonds that can be either 'C1-C3, C2-C4' or 'C1-C4, C2-C3', since these disulfide connectivities have been observed for conotoxins with cysteine framework V (for examples, see AC P0DQQ7 and AC P81755). In terms of tissue distribution, expressed by the venom duct.

The protein localises to the secreted. The polypeptide is Conotoxin vc5c (Conus victoriae (Queen Victoria cone)).